The sequence spans 258 residues: UPF0246 protein YaaA (258 aa).

The protein belongs to the UPF0246 family.

This is UPF0246 protein YaaA from Escherichia coli O157:H7.